A 190-amino-acid chain; its full sequence is ATP synthase subunit C lysine N-methyltransferase (190 aa).

The protein belongs to the ANT/ATPSC lysine N-methyltransferase family.

It is found in the mitochondrion. It catalyses the reaction L-lysyl-[protein] + 3 S-adenosyl-L-methionine = N(6),N(6),N(6)-trimethyl-L-lysyl-[protein] + 3 S-adenosyl-L-homocysteine + 3 H(+). Mitochondrial protein-lysine N-methyltransferase that trimethylates ATP synthase subunit C. Trimethylation is required for proper incorporation of the C subunit into the ATP synthase complex and mitochondrial respiration. The protein is ATP synthase subunit C lysine N-methyltransferase of Caenorhabditis elegans.